The following is a 38-amino-acid chain: Cytochrome b6-f complex subunit 5 (38 aa).

The helical transmembrane segment at 5-25 threads the bilayer; the sequence is LVLGIVLGLIPITLAGLFVAA.

Belongs to the PetG family. The 4 large subunits of the cytochrome b6-f complex are cytochrome b6, subunit IV (17 kDa polypeptide, PetD), cytochrome f and the Rieske protein, while the 4 small subunits are PetG, PetL, PetM and PetN. The complex functions as a dimer.

The protein resides in the cellular thylakoid membrane. Its function is as follows. Component of the cytochrome b6-f complex, which mediates electron transfer between photosystem II (PSII) and photosystem I (PSI), cyclic electron flow around PSI, and state transitions. PetG is required for either the stability or assembly of the cytochrome b6-f complex. This chain is Cytochrome b6-f complex subunit 5, found in Microcystis aeruginosa (strain NIES-843 / IAM M-2473).